Consider the following 108-residue polypeptide: Large ribosomal subunit protein uL24 (108 aa).

This sequence belongs to the universal ribosomal protein uL24 family. In terms of assembly, part of the 50S ribosomal subunit.

Functionally, one of two assembly initiator proteins, it binds directly to the 5'-end of the 23S rRNA, where it nucleates assembly of the 50S subunit. In terms of biological role, one of the proteins that surrounds the polypeptide exit tunnel on the outside of the subunit. The sequence is that of Large ribosomal subunit protein uL24 from Geotalea daltonii (strain DSM 22248 / JCM 15807 / FRC-32) (Geobacter daltonii).